Reading from the N-terminus, the 201-residue chain is Recombination protein RecR (201 aa).

The C4-type zinc-finger motif lies at 60–75 (CSCCGNVDTSDPCTIC). One can recognise a Toprim domain in the interval 83-178 (ATLIVVEDVS…RVTRLAHGVP (96 aa)).

Belongs to the RecR family.

In terms of biological role, may play a role in DNA repair. It seems to be involved in an RecBC-independent recombinational process of DNA repair. It may act with RecF and RecO. The polypeptide is Recombination protein RecR (Brucella melitensis biotype 1 (strain ATCC 23456 / CCUG 17765 / NCTC 10094 / 16M)).